The chain runs to 331 residues: tRNA uridine(34) hydroxylase (331 aa).

One can recognise a Rhodanese domain in the interval 123–217 (TDPEVLLIDT…YLEDVPQEES (95 aa)). Cys177 serves as the catalytic Cysteine persulfide intermediate. Residues 293–331 (KSRGEEHIGSEAAKAIKKRQAEKKLKRKNYHQHLTQGAE) form a disordered region. Residues 307-323 (AIKKRQAEKKLKRKNYH) show a composition bias toward basic residues.

This sequence belongs to the TrhO family.

The catalysed reaction is uridine(34) in tRNA + AH2 + O2 = 5-hydroxyuridine(34) in tRNA + A + H2O. Functionally, catalyzes oxygen-dependent 5-hydroxyuridine (ho5U) modification at position 34 in tRNAs. This is tRNA uridine(34) hydroxylase from Hahella chejuensis (strain KCTC 2396).